Consider the following 394-residue polypeptide: Putative FNIP repeat-containing protein R636 (394 aa).

FNIP repeat units follow at residues 126–167 (FNKS…FSVY), 168–207 (FDQP…LYFG), and 210–250 (FNQP…IFEA).

The polypeptide is Putative FNIP repeat-containing protein R636 (Acanthamoeba polyphaga mimivirus (APMV)).